The chain runs to 418 residues: UDP-N-acetylglucosamine 1-carboxyvinyltransferase (418 aa).

Phosphoenolpyruvate is bound at residue Lys22–Asn23. Arg91 lines the UDP-N-acetyl-alpha-D-glucosamine pocket. Cys115 serves as the catalytic Proton donor. Cys115 carries the post-translational modification 2-(S-cysteinyl)pyruvic acid O-phosphothioketal. UDP-N-acetyl-alpha-D-glucosamine-binding positions include Arg120–Leu124, Asp305, and Ile327.

The protein belongs to the EPSP synthase family. MurA subfamily.

The protein localises to the cytoplasm. The enzyme catalyses phosphoenolpyruvate + UDP-N-acetyl-alpha-D-glucosamine = UDP-N-acetyl-3-O-(1-carboxyvinyl)-alpha-D-glucosamine + phosphate. It participates in cell wall biogenesis; peptidoglycan biosynthesis. Its function is as follows. Cell wall formation. Adds enolpyruvyl to UDP-N-acetylglucosamine. In Wigglesworthia glossinidia brevipalpis, this protein is UDP-N-acetylglucosamine 1-carboxyvinyltransferase.